The sequence spans 500 residues: MSDRLFIFDTTLRDGEQVPGCQLNTVEKIQVAKALEQLGVDVIEAGFPVSSPGDFKSVVEISKAVTWPTICALTRAVEKDIDVAAEALRFAKRGRIHTGIGTSDSHIKYKFNSTREEIIERAIAATKYAKKYVEDVEFYCEDAGRTDNEYLARVVEAVIKAGATVVNIPDTTGYCLPDEYGAKIKYLMEHVDGVHNAILSTHCHNDLGMATANTVQGVLNGARQVEVTINGIGERAGNTSLEEVAMVFKSHKERDIITNITTNKIYSTSRMVSSLMNMPVQPNKAIVGRNAFAHSSGIHQDGVLKNAQTYEIIDPKDVGIDDNAIVLTARSGRAALKHRLHVLGVDLEQEKLDKVYDEFLKLADRKKDINDDDVLMLVGKDRTATHRIKLEYLQVTSGVGVQSVASICLNLSGVRRYEAAAGNGPVDAGIKAVKKAISNSDMTIQEFLIQAINKGSDDTGKVHMQVEYNGATYYGFSANTDIIAASVEAFVDAINKFIVD.

Residues 5 to 266 enclose the Pyruvate carboxyltransferase domain; it reads LFIFDTTLRD…ITNITTNKIY (262 aa). 4 residues coordinate Mn(2+): aspartate 14, histidine 202, histidine 204, and asparagine 238. The tract at residues 389 to 500 is regulatory domain; sequence KLEYLQVTSG…VDAINKFIVD (112 aa).

The protein belongs to the alpha-IPM synthase/homocitrate synthase family. LeuA type 1 subfamily. As to quaternary structure, homodimer. Requires Mn(2+) as cofactor.

It localises to the cytoplasm. The catalysed reaction is 3-methyl-2-oxobutanoate + acetyl-CoA + H2O = (2S)-2-isopropylmalate + CoA + H(+). It functions in the pathway amino-acid biosynthesis; L-leucine biosynthesis; L-leucine from 3-methyl-2-oxobutanoate: step 1/4. Functionally, catalyzes the condensation of the acetyl group of acetyl-CoA with 3-methyl-2-oxobutanoate (2-ketoisovalerate) to form 3-carboxy-3-hydroxy-4-methylpentanoate (2-isopropylmalate). This is 2-isopropylmalate synthase from Parabacteroides distasonis (strain ATCC 8503 / DSM 20701 / CIP 104284 / JCM 5825 / NCTC 11152).